A 428-amino-acid polypeptide reads, in one-letter code: Cell division protein DamX (428 aa).

The interval 1–99 is disordered; the sequence is MDEFKPEDEL…KRKKAASKPA (99 aa). The Cytoplasmic segment spans residues 1–103; that stretch reads MDEFKPEDEL…AASKPASRQY (103 aa). Basic and acidic residues-rich tracts occupy residues 7-36 and 50-64; these read EDELKPDPSDRRTGRSRQSSERSERTERGE and DDRRPTRAQKERNEE. The stretch at 55-87 forms a coiled coil; sequence TRAQKERNEEPEIEEEIDESEDETVDEERVERR. Over residues 65–82 the composition is skewed to acidic residues; it reads PEIEEEIDESEDETVDEE. A compositionally biased stretch (basic residues) spans 86–95; it reads RRPRKRKKAA. Residues 104 to 124 traverse the membrane as a helical segment; it reads MMMGVGILVLLLLIIGIGSAL. Over 125–428 the chain is Periplasmic; sequence KAPSTTSSDQ…PLRQVQADLK (304 aa). Disordered stretches follow at residues 149–190 and 226–344; these read TDQA…VATD and EPAT…KSAP. Residues 236 to 257 are compositionally biased toward polar residues; that stretch reads GNASRDTAKTQTAERPSTTRPA. Over residues 288–334 the composition is skewed to low complexity; that stretch reads PAAPVASTKAPAATSTPAPKETATTAPVQTASPAQTTATPAAGAKTA. Residues 342 to 419 form the SPOR domain; it reads SAPSSHYTLQ…VQAKNPWAKP (78 aa).

Belongs to the DamX family. As to quaternary structure, interacts in vitro with multiple Fts proteins, including FtsQ and FtsN.

The protein localises to the cell inner membrane. Functionally, non-essential cell division protein. The polypeptide is Cell division protein DamX (Escherichia coli (strain K12)).